Reading from the N-terminus, the 275-residue chain is Large ribosomal subunit protein uL2 (275 aa).

Residues 221–275 (RGMTMNPVDHPMGGGEGRSKGHIPQSPWGIPAKGYKTRKSKKPSDKLIVKRRKQK) are disordered.

This sequence belongs to the universal ribosomal protein uL2 family. In terms of assembly, part of the 50S ribosomal subunit. Forms a bridge to the 30S subunit in the 70S ribosome.

Its function is as follows. One of the primary rRNA binding proteins. Required for association of the 30S and 50S subunits to form the 70S ribosome, for tRNA binding and peptide bond formation. It has been suggested to have peptidyltransferase activity; this is somewhat controversial. Makes several contacts with the 16S rRNA in the 70S ribosome. The protein is Large ribosomal subunit protein uL2 of Kosmotoga olearia (strain ATCC BAA-1733 / DSM 21960 / TBF 19.5.1).